The sequence spans 714 residues: ATP-dependent RNA helicase MSS116, mitochondrial (714 aa).

A mitochondrion-targeting transit peptide spans 1-37 (MSWVRSVAIRTALCRQVRSRYQSYGSTRLFSSSLRSW). The short motif at 74–102 (SLEASRKFDKSIFRGLYNSKMKNMTVVQQ) is the Q motif element. The Helicase ATP-binding domain occupies 106-296 (MPMMDTKTGV…HETIGKEYEY (191 aa)). 119–126 (AKTGTGKT) is an ATP binding site. Residues 234-237 (DEAD) carry the DEAD box motif. Positions 335-498 (HINDKYFKAI…TSPDHFQRLG (164 aa)) constitute a Helicase C-terminal domain. A disordered region spans residues 581–714 (SSNDRKSKRT…TYGRRDDSDE (134 aa)). Composition is skewed to basic and acidic residues over residues 619 to 640 (RSFD…DRKS), 656 to 671 (YGDK…DKSY), and 679 to 697 (SNDR…EKRN).

Belongs to the DEAD box helicase family. DDX18/HAS1 subfamily.

It localises to the mitochondrion matrix. The catalysed reaction is ATP + H2O = ADP + phosphate + H(+). Its function is as follows. ATP-dependent RNA helicase required for mitochondrial splicing of group I and II introns. Also required for efficient mitochondrial translation. This Meyerozyma guilliermondii (strain ATCC 6260 / CBS 566 / DSM 6381 / JCM 1539 / NBRC 10279 / NRRL Y-324) (Yeast) protein is ATP-dependent RNA helicase MSS116, mitochondrial (MSS116).